A 122-amino-acid chain; its full sequence is Large ribosomal subunit protein uL14 (122 aa).

Belongs to the universal ribosomal protein uL14 family. As to quaternary structure, part of the 50S ribosomal subunit. Forms a cluster with proteins L3 and L19. In the 70S ribosome, L14 and L19 interact and together make contacts with the 16S rRNA in bridges B5 and B8.

In terms of biological role, binds to 23S rRNA. Forms part of two intersubunit bridges in the 70S ribosome. This is Large ribosomal subunit protein uL14 from Thermus aquaticus.